The following is a 219-amino-acid chain: 2-hydroxy-3-keto-5-methylthiopentenyl-1-phosphate phosphatase (219 aa).

The protein belongs to the HAD-like hydrolase superfamily. MtnX family.

It catalyses the reaction 2-hydroxy-5-methylsulfanyl-3-oxopent-1-enyl phosphate + H2O = 1,2-dihydroxy-5-(methylsulfanyl)pent-1-en-3-one + phosphate. It functions in the pathway amino-acid biosynthesis; L-methionine biosynthesis via salvage pathway; L-methionine from S-methyl-5-thio-alpha-D-ribose 1-phosphate: step 4/6. Its function is as follows. Dephosphorylates 2-hydroxy-3-keto-5-methylthiopentenyl-1-phosphate (HK-MTPenyl-1-P) yielding 1,2-dihydroxy-3-keto-5-methylthiopentene (DHK-MTPene). The polypeptide is 2-hydroxy-3-keto-5-methylthiopentenyl-1-phosphate phosphatase (Bacillus cereus (strain 03BB102)).